The sequence spans 391 residues: Phosphoglycerate kinase (391 aa).

Residues 21–23, R36, 59–62, R113, and R146 each bind substrate; these read DLN and HLGR. ATP is bound by residues K197, E319, and 345–348; that span reads GGDT.

The protein belongs to the phosphoglycerate kinase family. Monomer.

The protein localises to the cytoplasm. It carries out the reaction (2R)-3-phosphoglycerate + ATP = (2R)-3-phospho-glyceroyl phosphate + ADP. It participates in carbohydrate degradation; glycolysis; pyruvate from D-glyceraldehyde 3-phosphate: step 2/5. This chain is Phosphoglycerate kinase, found in Shewanella baltica (strain OS195).